Consider the following 78-residue polypeptide: Acyl carrier protein (78 aa).

The Carrier domain occupies 2–77 (STIEERVKKI…EAIDYINAHA (76 aa)). The residue at position 37 (Ser37) is an O-(pantetheine 4'-phosphoryl)serine.

This sequence belongs to the acyl carrier protein (ACP) family. 4'-phosphopantetheine is transferred from CoA to a specific serine of apo-ACP by AcpS. This modification is essential for activity because fatty acids are bound in thioester linkage to the sulfhydryl of the prosthetic group.

It is found in the cytoplasm. It functions in the pathway lipid metabolism; fatty acid biosynthesis. Functionally, carrier of the growing fatty acid chain in fatty acid biosynthesis. This chain is Acyl carrier protein, found in Stutzerimonas stutzeri (strain A1501) (Pseudomonas stutzeri).